The sequence spans 240 residues: 2,3,4,5-tetrahydropyridine-2,6-dicarboxylate N-acetyltransferase (240 aa).

Belongs to the transferase hexapeptide repeat family. DapH subfamily.

The catalysed reaction is (S)-2,3,4,5-tetrahydrodipicolinate + acetyl-CoA + H2O = L-2-acetamido-6-oxoheptanedioate + CoA. Its pathway is amino-acid biosynthesis; L-lysine biosynthesis via DAP pathway; LL-2,6-diaminopimelate from (S)-tetrahydrodipicolinate (acetylase route): step 1/3. Catalyzes the transfer of an acetyl group from acetyl-CoA to tetrahydrodipicolinate. In Bacillus cytotoxicus (strain DSM 22905 / CIP 110041 / 391-98 / NVH 391-98), this protein is 2,3,4,5-tetrahydropyridine-2,6-dicarboxylate N-acetyltransferase.